A 365-amino-acid chain; its full sequence is tRNA N6-adenosine threonylcarbamoyltransferase (365 aa).

The Fe cation site is built by histidine 119 and histidine 123. Residues 141–145, aspartate 174, glycine 187, and asparagine 288 contribute to the substrate site; that span reads LVSGG. Fe cation is bound at residue aspartate 316.

It belongs to the KAE1 / TsaD family. It depends on Fe(2+) as a cofactor.

It is found in the cytoplasm. It carries out the reaction L-threonylcarbamoyladenylate + adenosine(37) in tRNA = N(6)-L-threonylcarbamoyladenosine(37) in tRNA + AMP + H(+). Required for the formation of a threonylcarbamoyl group on adenosine at position 37 (t(6)A37) in tRNAs that read codons beginning with adenine. Is involved in the transfer of the threonylcarbamoyl moiety of threonylcarbamoyl-AMP (TC-AMP) to the N6 group of A37, together with TsaE and TsaB. TsaD likely plays a direct catalytic role in this reaction. The polypeptide is tRNA N6-adenosine threonylcarbamoyltransferase (Rhizobium etli (strain CIAT 652)).